Here is a 114-residue protein sequence, read N- to C-terminus: Large ribosomal subunit protein P1 (114 aa).

Positions 55 to 114 (EEAAAAPAAAPAASGSDDEAAADDGDDDEEADADEAAEAEDAGDDDDEEPSGEGLGDLFG) are disordered. Residues 56–69 (EAAAAPAAAPAASG) show a composition bias toward low complexity. Residues 70–105 (SDDEAAADDGDDDEEADADEAAEAEDAGDDDDEEPS) show a composition bias toward acidic residues.

Belongs to the eukaryotic ribosomal protein P1/P2 family. In terms of assembly, part of the 50S ribosomal subunit. Homodimer, it forms part of the ribosomal stalk which helps the ribosome interact with GTP-bound translation factors. Forms a heptameric uL10/P0(P1)2(P1)2(P1)2 complex, where uL10/P0 forms an elongated spine to which the P1 dimers bind in a sequential fashion.

Functionally, forms part of the ribosomal stalk, playing a central role in the interaction of the ribosome with GTP-bound translation factors. In Halobacterium salinarum (strain ATCC 700922 / JCM 11081 / NRC-1) (Halobacterium halobium), this protein is Large ribosomal subunit protein P1.